A 190-amino-acid chain; its full sequence is Elongation factor P-like protein (190 aa).

This sequence belongs to the elongation factor P family.

This is Elongation factor P-like protein from Pseudoalteromonas atlantica (strain T6c / ATCC BAA-1087).